The sequence spans 314 residues: Palmitoyl-protein thioesterase 1 (314 aa).

A signal peptide spans 1–25; the sequence is MISICCSRFSCILFLLFLIFSLVLS. Disulfide bonds link C53–C54, C104–C136, and C160–C168. S123 acts as the Nucleophile in catalysis. N240 carries N-linked (GlcNAc...) asparagine glycosylation. Catalysis depends on residues D241 and H295.

It belongs to the palmitoyl-protein thioesterase family. In terms of tissue distribution, ubiquitously expressed.

Its subcellular location is the lysosome. It carries out the reaction S-hexadecanoyl-L-cysteinyl-[protein] + H2O = L-cysteinyl-[protein] + hexadecanoate + H(+). Functionally, cleaves thioester-linked long fatty acyl groups such as palmitate from modified cysteine residues in proteins or peptides. The protein is Palmitoyl-protein thioesterase 1 (Ppt1) of Drosophila melanogaster (Fruit fly).